Consider the following 431-residue polypeptide: Adenylosuccinate synthetase (431 aa).

Residues 13–19 and 41–43 each bind GTP; these read GDEGKGK and GHT. Asp14 (proton acceptor) is an active-site residue. 2 residues coordinate Mg(2+): Asp14 and Gly41. IMP-binding positions include 14–17, 39–42, Thr130, Arg144, Gln225, Thr240, and Arg304; these read DEGK and NAGH. Catalysis depends on His42, which acts as the Proton donor. 300–306 is a binding site for substrate; that stretch reads SVTGRPR. GTP is bound by residues Arg306, 332–334, and 414–416; these read KLD and STG.

The protein belongs to the adenylosuccinate synthetase family. As to quaternary structure, homodimer. Requires Mg(2+) as cofactor.

The protein resides in the cytoplasm. It carries out the reaction IMP + L-aspartate + GTP = N(6)-(1,2-dicarboxyethyl)-AMP + GDP + phosphate + 2 H(+). Its pathway is purine metabolism; AMP biosynthesis via de novo pathway; AMP from IMP: step 1/2. Plays an important role in the de novo pathway of purine nucleotide biosynthesis. Catalyzes the first committed step in the biosynthesis of AMP from IMP. This is Adenylosuccinate synthetase from Bordetella avium (strain 197N).